Reading from the N-terminus, the 408-residue chain is MKRTLRNPGNSSTVGDVHDVFFEYDVSNVGRKRPRTKEEGYYESESEEDEDQILNKEKKEGQSEDMFSDTSEDEKRTLPNDEAQKRRDFIENGDAERLAHKGLRNKEVLNDDSDDEDDNGKYSKLRYEDIEGQEDTNQANDLDADEEGSEISVPSSPKRMSFNLKEDMEEGDFDENGNFIRKNYDPESQYDAWLNGSVSNKKSIAAAREAEQKRKEMENRRRNQELEEFSKLPFSTVPEALSFFIARMERDESILEFLQRQSGNKKSYKKKKNNTAEGISPERKSADAFRKKLIELITAGLTFLEDKIGKEDIYSETRESLQRIYQKLTSNSWSSPVSYDDSNSSQYNFKWEFDDKTYGPYTASQIQAWSNEGYFTDAKHAAFIQLANMDEWMYPNNICFCDVVSLKK.

The tract at residues 1–161 is disordered; it reads MKRTLRNPGN…SVPSSPKRMS (161 aa). Residues 41–52 are compositionally biased toward acidic residues; sequence YYESESEEDEDQ. Basic and acidic residues-rich tracts occupy residues 53–62, 73–109, and 119–129; these read ILNKEKKEGQ, DEKRTLPNDEAQKRRDFIENGDAERLAHKGLRNKEVL, and NGKYSKLRYED. In terms of domain architecture, GYF spans 344 to 402; sequence SSQYNFKWEFDDKTYGPYTASQIQAWSNEGYFTDAKHAAFIQLANMDEWMYPNNICFCD.

It belongs to the LIN1 family.

This is LIN1-like protein from Schizosaccharomyces pombe (strain 972 / ATCC 24843) (Fission yeast).